The chain runs to 336 residues: Spore photoproduct lyase (336 aa).

Residues 74 to 305 (CKPSANYQLP…KFGQFGYGKY (232 aa)) form the Radical SAM core domain. Residues Cys-88, Cys-92, and Cys-95 each coordinate [4Fe-4S] cluster. Positions 215 to 232 (ESAYNILNSGYKTGFIVG) form a DNA-binding region, H-T-H motif.

Belongs to the radical SAM superfamily. SPL family. As to quaternary structure, monomer or homodimer. Requires [4Fe-4S] cluster as cofactor. The cofactor is S-adenosyl-L-methionine.

The catalysed reaction is (5R)-5,6-dihydro-5-(thymidin-7-yl)thymidine in DNA = a thymidine dimer in DNA. Involved in repair of UV radiation-induced DNA damage during spore germination. Can repair thymine dimer 5-thyminyl-5,6-dihydrothymine (known as spore photoproduct (SP)) by in situ monomerization of SP to two thymines. This chain is Spore photoproduct lyase (splB), found in Clostridium acetobutylicum (strain ATCC 824 / DSM 792 / JCM 1419 / IAM 19013 / LMG 5710 / NBRC 13948 / NRRL B-527 / VKM B-1787 / 2291 / W).